Consider the following 272-residue polypeptide: Dermonecrotic toxin SpeSicTox-betaIB2a (272 aa).

Residue His5 is part of the active site. Residues Glu25 and Asp27 each coordinate Mg(2+). His41 acts as the Nucleophile in catalysis. 2 disulfide bridges follow: Cys45–Cys51 and Cys47–Cys191. Position 85 (Asp85) interacts with Mg(2+).

It belongs to the arthropod phospholipase D family. Class II subfamily. The cofactor is Mg(2+). Expressed by the venom gland.

It localises to the secreted. It catalyses the reaction an N-(acyl)-sphingosylphosphocholine = an N-(acyl)-sphingosyl-1,3-cyclic phosphate + choline. It carries out the reaction an N-(acyl)-sphingosylphosphoethanolamine = an N-(acyl)-sphingosyl-1,3-cyclic phosphate + ethanolamine. The catalysed reaction is a 1-acyl-sn-glycero-3-phosphocholine = a 1-acyl-sn-glycero-2,3-cyclic phosphate + choline. The enzyme catalyses a 1-acyl-sn-glycero-3-phosphoethanolamine = a 1-acyl-sn-glycero-2,3-cyclic phosphate + ethanolamine. Its function is as follows. Dermonecrotic toxins cleave the phosphodiester linkage between the phosphate and headgroup of certain phospholipids (sphingolipid and lysolipid substrates), forming an alcohol (often choline) and a cyclic phosphate. This toxin acts on sphingomyelin (SM). It may also act on ceramide phosphoethanolamine (CPE), lysophosphatidylcholine (LPC) and lysophosphatidylethanolamine (LPE), but not on lysophosphatidylserine (LPS), and lysophosphatidylglycerol (LPG). It acts by transphosphatidylation, releasing exclusively cyclic phosphate products as second products. Induces dermonecrosis, hemolysis, increased vascular permeability, edema, inflammatory response, and platelet aggregation. The protein is Dermonecrotic toxin SpeSicTox-betaIB2a of Sicarius peruensis (Six-eyed sand spider).